A 183-amino-acid chain; its full sequence is Hypoxanthine/guanine phosphoribosyltransferase (183 aa).

The protein belongs to the purine/pyrimidine phosphoribosyltransferase family. Archaeal HPRT subfamily. Homodimer.

The protein resides in the cytoplasm. It carries out the reaction IMP + diphosphate = hypoxanthine + 5-phospho-alpha-D-ribose 1-diphosphate. The enzyme catalyses GMP + diphosphate = guanine + 5-phospho-alpha-D-ribose 1-diphosphate. Its pathway is purine metabolism; IMP biosynthesis via salvage pathway; IMP from hypoxanthine: step 1/1. Its function is as follows. Catalyzes a salvage reaction resulting in the formation of IMP that is energically less costly than de novo synthesis. The polypeptide is Hypoxanthine/guanine phosphoribosyltransferase (Methanothermococcus okinawensis (strain DSM 14208 / JCM 11175 / IH1)).